Here is a 147-residue protein sequence, read N- to C-terminus: UPF0216 protein MK1676 (147 aa).

Belongs to the UPF0216 family.

This Methanopyrus kandleri (strain AV19 / DSM 6324 / JCM 9639 / NBRC 100938) protein is UPF0216 protein MK1676.